The sequence spans 104 residues: Circadian clock oscillator protein KaiB (104 aa).

It belongs to the KaiB family. The KaiABC complex composition changes during the circadian cycle to control KaiC phosphorylation. Complexes KaiC(6), KaiA(2-4):KaiC(6), KaiB(6):KaiC(6) and KaiC(6):KaiB(6):KaiA(12) are among the most important forms, many form cooperatively. Undergoes a major conformational rearrangment; in the free state forms homotetramers as a dimer of dimers. When bound to the CI domain of KaiC switches to a monomeric thioredoxin-fold (KaiB(fs)). KaiB(fs) binds CikA, leading it to dephosphorylate phospho-RpaA.

In terms of biological role, key component of the KaiABC oscillator complex, which constitutes the main circadian regulator in cyanobacteria. Complex composition changes during the circadian cycle to control KaiC phosphorylation. KaiA stimulates KaiC autophosphorylation, while KaiB sequesters KaiA, leading to KaiC autodephosphorylation. Phospho-Ser-431 KaiC accumulation triggers binding of KaiB to form the KaiB(6):KaiC(6) complex, leading to changes in output regulators CikA and SasA. KaiB switches to a thioredoxin-like fold (KaiB(fs)) when bound to KaiC. KaiB(6):KaiC(6) formation exposes a site for KaiA binding that sequesters KaiA from KaiC, making the KaiC(6):KaiB(6):KaiA(12) complex that results in KaiC autodephosphorylation. Functionally, a metamorphic protein which reversibly switches between an inactive tetrameric fold and a rare, thioredoxin-like monomeric fold (KaiB(fs)). KaiB(fs) binds phospho-KaiC, KaiA and CikA. KaiA and CikA compete for binding to KaiB(fs), and KaiB(fs) and SasA compete for binding to KaiC, thus the clock oscillator and output signal pathway are tightly coupled. This chain is Circadian clock oscillator protein KaiB, found in Rippkaea orientalis (strain PCC 8801 / RF-1) (Cyanothece sp. (strain PCC 8801)).